Here is a 754-residue protein sequence, read N- to C-terminus: Deadenylation-dependent mRNA-decapping factor pdc2 (754 aa).

An interaction with lsm1 region spans residues 499–754 (LESIWKALYI…MGLDARQLSA (256 aa)).

The protein belongs to the PAT1 family. In terms of assembly, interacts with dcp2. Interacts with lsm1; via C-terminus.

Its subcellular location is the cytoplasm. The protein localises to the nucleus. It is found in the P-body. Its function is as follows. Activator of decapping that functions as a general and active mechanism of translational repression and required for P-body formation. Stabilizes the 3' terminus of mRNAs and modulates the rates of mRNA-decapping that occur following deadenylation. Might be required for promoting the formation or the stabilization of the preinitiation translation complexes. Necessary for accurate chromosome transmission during cell division. Together with lsm1, recruits the deadenylase ccr4 to P-bodies. The protein is Deadenylation-dependent mRNA-decapping factor pdc2 of Schizosaccharomyces pombe (strain 972 / ATCC 24843) (Fission yeast).